The primary structure comprises 139 residues: Large-conductance mechanosensitive channel (139 aa).

3 helical membrane-spanning segments follow: residues 16–36, 40–60, and 79–99; these read VIDLAVGVIIGAAFNDIVKAL, IVMPPIGLVLSGIDFSDLAWV, and GAFINTCIRFLIVAWAVFMLV.

This sequence belongs to the MscL family. In terms of assembly, homopentamer.

The protein resides in the cell inner membrane. In terms of biological role, channel that opens in response to stretch forces in the membrane lipid bilayer. May participate in the regulation of osmotic pressure changes within the cell. This Phenylobacterium zucineum (strain HLK1) protein is Large-conductance mechanosensitive channel.